Reading from the N-terminus, the 476-residue chain is Ribulose bisphosphate carboxylase/oxygenase activase 1, chloroplastic (476 aa).

The N-terminal 56 residues, 1–56, are a transit peptide targeting the chloroplast; sequence MAAAYSTVGAVNRAPLSLNGSGARASLVPSTAFFGSSLKKSAAKFPKASSGNFKIV. Position 165–172 (165–172) interacts with ATP; that stretch reads GGKGQGKS.

Belongs to the RuBisCO activase family.

The protein resides in the plastid. It localises to the chloroplast stroma. Its function is as follows. Activation of RuBisCO (ribulose-1,5-bisphosphate carboxylase/oxygenase; EC 4.1.1.39) involves the ATP-dependent carboxylation of the epsilon-amino group of lysine leading to a carbamate structure. The chain is Ribulose bisphosphate carboxylase/oxygenase activase 1, chloroplastic (RCA1) from Larrea tridentata (Creosote bush).